A 192-amino-acid polypeptide reads, in one-letter code: Fe/S biogenesis protein NfuA (192 aa).

Positions 149 and 152 each coordinate [4Fe-4S] cluster.

The protein belongs to the NfuA family. As to quaternary structure, homodimer. The cofactor is [4Fe-4S] cluster.

Involved in iron-sulfur cluster biogenesis. Binds a 4Fe-4S cluster, can transfer this cluster to apoproteins, and thereby intervenes in the maturation of Fe/S proteins. Could also act as a scaffold/chaperone for damaged Fe/S proteins. The polypeptide is Fe/S biogenesis protein NfuA (Shewanella putrefaciens (strain CN-32 / ATCC BAA-453)).